Here is a 344-residue protein sequence, read N- to C-terminus: Uroporphyrinogen decarboxylase (344 aa).

Substrate-binding positions include 23–27 (RQAGR), aspartate 73, tyrosine 149, threonine 204, and histidine 321.

Belongs to the uroporphyrinogen decarboxylase family. In terms of assembly, homodimer.

It is found in the cytoplasm. The catalysed reaction is uroporphyrinogen III + 4 H(+) = coproporphyrinogen III + 4 CO2. The protein operates within porphyrin-containing compound metabolism; protoporphyrin-IX biosynthesis; coproporphyrinogen-III from 5-aminolevulinate: step 4/4. Functionally, catalyzes the decarboxylation of four acetate groups of uroporphyrinogen-III to yield coproporphyrinogen-III. The chain is Uroporphyrinogen decarboxylase from Francisella tularensis subsp. novicida (strain U112).